We begin with the raw amino-acid sequence, 414 residues long: 2,3-bisphosphoglycerate-independent phosphoglycerate mutase (414 aa).

The protein belongs to the BPG-independent phosphoglycerate mutase family. A-PGAM subfamily.

The catalysed reaction is (2R)-2-phosphoglycerate = (2R)-3-phosphoglycerate. It functions in the pathway carbohydrate degradation; glycolysis; pyruvate from D-glyceraldehyde 3-phosphate: step 3/5. Functionally, catalyzes the interconversion of 2-phosphoglycerate and 3-phosphoglycerate. This is 2,3-bisphosphoglycerate-independent phosphoglycerate mutase from Saccharolobus islandicus (strain M.14.25 / Kamchatka #1) (Sulfolobus islandicus).